The sequence spans 103 residues: Trp operon repressor homolog (103 aa).

The DNA-binding element occupies Q62–H85.

This sequence belongs to the TrpR family. In terms of assembly, homodimer.

The protein resides in the cytoplasm. This protein is an aporepressor. When complexed with L-tryptophan it binds the operator region of the trp operon and prevents the initiation of transcription. The sequence is that of Trp operon repressor homolog from Photobacterium profundum (strain SS9).